Here is a 122-residue protein sequence, read N- to C-terminus: Large ribosomal subunit protein uL14 (122 aa).

It belongs to the universal ribosomal protein uL14 family. In terms of assembly, part of the 50S ribosomal subunit. Forms a cluster with proteins L3 and L19. In the 70S ribosome, L14 and L19 interact and together make contacts with the 16S rRNA in bridges B5 and B8.

In terms of biological role, binds to 23S rRNA. Forms part of two intersubunit bridges in the 70S ribosome. This is Large ribosomal subunit protein uL14 from Francisella philomiragia subsp. philomiragia (strain ATCC 25017 / CCUG 19701 / FSC 153 / O#319-036).